Consider the following 148-residue polypeptide: uncharacterized protein (148 aa).

This is an uncharacterized protein from Bacillus subtilis (strain 168).